A 1201-amino-acid polypeptide reads, in one-letter code: MIGLFKDEWFNISILNDNLFLKRYCYESNNNNNNNNTLYTIIVPFDKSINPSQFDPSTINDYFIFLYKNTKKINLNSINKLQYKSNKKEILVSFDITYIHNSNNNNNNNNNKLKSVLISNSCSKKLNLFNNDIVHLKPIKKKLTVLQRVVLLANDNESFIESSNPSESSSSTTTINSKYLVNEEFRNYLVENSILFQSPNNIVIENHQKHKSFSYKVLECFPLLQGTVSNSTTIIIISPDDKILNTLPSNNNNNNNNNNNNNNNNNNNNNNNNNNNNNNNNKEEEVEEEEVEVEEEEKDNKLKLNNNLRLSNFIIHPIINISNNTTTKNEDIGDSNNLFHFTPSSKGILSNNKKFINISQLKSIPTEIDFEFDISKEYDYLVDCLVSLNTLKSLNLFNGSWIKIKNITNNNNNNNNKEYEIAIRIFSITSSLKLKDQVLYLPPISIFNLNIDYKNFLKLSNYEIISNQFELILLKSNKPNINNNNNNDSFPINYPTANRIKISRIKNQNSSGYKSYSHQLEKYFQKKRLLKQNDIIVISTKVNNEEELINSNNSNNNNNYNNNNNNNNNNNLVYFKVEIILCNQFENINGNQIYLIDKNTTSIIQEGSSNSMVPSKIESFYWRGGDQEESKDNSMVPLELIYENEFKTIVDLISPFLMGDKFSFDFNCTLLLNGPQGVGKRTLLNRVAKQMGIHVYEVDCYKLYDFVESKKDWNIRNVLEQASNSTPTLLILKNFEVLEQTAQSMQQEKKESNLSQTLINILKDINDSNTSNINSNKYPLIITVTVNSMDELSNKVRNWFKHEITLNSPDENQRFKILKYLTKNLPIDIGNTVSIKNLSIRTASFLNSNLRALIQRSSINALKRVLSIQQMMNDEIKPIEIYNCGFLVMGDDIQKSLSEMQEYQSSSIGAPKIPNVSWDDVGGLANVKSEIMDTIQLPLEHPHLFASGIGKRSGILLFGPPGTGKTLLAKAIATECSLNFLSVKGPELINMYIGESEKNIREIFNKARQAKPCVIFFDELDSLAPSRGNGADSGGVMDRVVSQLLAELDGMQKSSDVFIIGATNRPDLLDSSLMRPGRLDRLLYLGISSEKENQFKILQALTRKFNLADDVDLRKVVENCPMNLTGADFYALASDAMSNAFHERITASINGEINEEEQNQKLIVYQNHFIKAVNSLVPSVSLDELEYYHKVQKQFSGNNKS.

Positions 247-300 (LPSNNNNNNNNNNNNNNNNNNNNNNNNNNNNNNNNKEEEVEEEEVEVEEEEKDN) are disordered. Low complexity predominate over residues 250 to 280 (NNNNNNNNNNNNNNNNNNNNNNNNNNNNNNN). The span at 284-297 (EEVEEEEVEVEEEE) shows a compositional bias: acidic residues. Residue 959-966 (GPPGTGKT) participates in ATP binding.

It belongs to the AAA ATPase family. As to quaternary structure, interacts with PEX1; forming the PEX1-PEX6 AAA ATPase complex, which is composed of a heterohexamer formed by a trimer of PEX1-PEX6 dimers.

It is found in the cytoplasm. The protein resides in the cytosol. Its subcellular location is the peroxisome membrane. It carries out the reaction ATP + H2O = ADP + phosphate + H(+). Its function is as follows. Component of the PEX1-PEX6 AAA ATPase complex, a protein dislocase complex that mediates the ATP-dependent extraction of the PEX5 receptor from peroxisomal membranes, an essential step for PEX5 recycling. Specifically recognizes PEX5 monoubiquitinated at 'Cys-11', and pulls it out of the peroxisome lumen through the PEX2-PEX10-PEX12 retrotranslocation channel. Extraction by the PEX1-PEX6 AAA ATPase complex is accompanied by unfolding of the TPR repeats and release of bound cargo from PEX5. The protein is Peroxisomal ATPase PEX6 (pex6) of Dictyostelium discoideum (Social amoeba).